Reading from the N-terminus, the 1077-residue chain is Rap guanine nucleotide exchange factor 1 (1077 aa).

A Glycyl lysine isopeptide (Lys-Gly) (interchain with G-Cter in SUMO2) cross-link involves residue Leu-57. Disordered stretches follow at residues 207-235 (IEKQ…AELP) and 248-300 (TGMS…PTRV). A compositionally biased stretch (low complexity) spans 213–228 (PSPTSPVKPSSPASKP). Phosphoserine is present on residues Ser-281, Ser-293, Ser-314, Ser-335, and Ser-360. Positions 281–292 (SPPPALPPKKRQ) match the SH3-binding motif. 2 disordered regions span residues 336-376 (GGSH…QCSR) and 411-494 (LSPL…EDLQ). Over residues 358–371 (SKSDEQLSSLDRDS) the composition is skewed to basic and acidic residues. Residues 451–462 (DTPPALPEKKRR) carry the SH3-binding motif. Positions 484–494 (QYDNISGEDLQ) are enriched in polar residues. Position 504 is a phosphotyrosine; by HCK (Tyr-504). 2 consecutive short sequence motifs (SH3-binding) follow at residues 538 to 549 (EKPPPLPEKKNK) and 606 to 617 (APPPALPPKQRQ). A disordered region spans residues 600–670 (DSVQELAPPP…SEEEVDELSL (71 aa)). Residues 640 to 651 (KDSRDGSERAPK) are compositionally biased toward basic and acidic residues. Residues 660 to 669 (QSEEEVDELS) show a composition bias toward acidic residues. The N-terminal Ras-GEF domain occupies 688-810 (DGPDVRGGSG…LRKNILDKVD (123 aa)). The Ras-GEF domain maps to 840 to 1064 (HSHEIAEQLT…WELSLKIKPR (225 aa)).

Interacts with HCK (via SH3-binding sites). Interacts with CRK (via SH3-binding sites). In terms of processing, phosphorylation at Tyr-504 enhances activity as Rap guanine nucleotide exchange factor. As to expression, ubiquitously expressed in adult and fetus. Expression is high in adult skeletal muscle and placenta and in fetal brain and heart. Low levels of expression in adult and fetal liver.

It localises to the early endosome. In terms of biological role, guanine nucleotide-releasing protein that binds to SH3 domain of CRK and GRB2/ASH. Transduces signals from CRK to activate RAS. Involved in cell branching and adhesion mediated by BCAR1-CRK-RAPGEF1 signaling and activation of RAP1. Plays a role in the establishment of basal endothelial barrier function. Plays a role in nerve growth factor (NGF)-induced sustained activation of Rap1 and neurite outgrowth. This is Rap guanine nucleotide exchange factor 1 (RAPGEF1) from Homo sapiens (Human).